The chain runs to 266 residues: UPF0294 protein YafD (266 aa).

The protein belongs to the UPF0294 family.

Its subcellular location is the cytoplasm. This is UPF0294 protein YafD from Salmonella agona (strain SL483).